Here is a 142-residue protein sequence, read N- to C-terminus: 3-hydroxyacyl-[acyl-carrier-protein] dehydratase FabZ (142 aa).

His47 is a catalytic residue.

It belongs to the thioester dehydratase family. FabZ subfamily.

The protein resides in the cytoplasm. The enzyme catalyses a (3R)-hydroxyacyl-[ACP] = a (2E)-enoyl-[ACP] + H2O. Its function is as follows. Involved in unsaturated fatty acids biosynthesis. Catalyzes the dehydration of short chain beta-hydroxyacyl-ACPs and long chain saturated and unsaturated beta-hydroxyacyl-ACPs. The polypeptide is 3-hydroxyacyl-[acyl-carrier-protein] dehydratase FabZ (Thermoanaerobacter pseudethanolicus (strain ATCC 33223 / 39E) (Clostridium thermohydrosulfuricum)).